The chain runs to 150 residues: MLGAALRRCAVAATTRAGPRGLLHSARTPGPAAAIQSVRCYSHGSQETDEEFDARWVTYFNKPDIDAWELRKGINTLVTYDMVPEPKIIDAALRACRRLNDFASTVRILEAVKDKAGPHKEIYPYVIQELRPTLNELGISTPEELGLDKV.

The N-terminal 41 residues, 1–41 (MLGAALRRCAVAATTRAGPRGLLHSARTPGPAAAIQSVRCY), are a transit peptide targeting the mitochondrion. Positions 2 to 17 (LGAALRRCAVAATTRA) match the SIFI-degron motif. Residues Lys87 and Lys113 each carry the N6-acetyllysine modification. Thr141 carries the phosphothreonine modification.

This sequence belongs to the cytochrome c oxidase subunit 5A family. Component of the cytochrome c oxidase (complex IV, CIV), a multisubunit enzyme composed of 14 subunits. The complex is composed of a catalytic core of 3 subunits MT-CO1, MT-CO2 and MT-CO3, encoded in the mitochondrial DNA, and 11 supernumerary subunits COX4I, COX5A, COX5B, COX6A, COX6B, COX6C, COX7A, COX7B, COX7C, COX8 and NDUFA4, which are encoded in the nuclear genome. The complex exists as a monomer or a dimer and forms supercomplexes (SCs) in the inner mitochondrial membrane with NADH-ubiquinone oxidoreductase (complex I, CI) and ubiquinol-cytochrome c oxidoreductase (cytochrome b-c1 complex, complex III, CIII), resulting in different assemblies (supercomplex SCI(1)III(2)IV(1) and megacomplex MCI(2)III(2)IV(2)). Interacts with AFG1L. Interacts with RAB5IF. Post-translationally, in response to mitochondrial stress, the precursor protein is ubiquitinated by the SIFI complex in the cytoplasm before mitochondrial import, leading to its degradation. Within the SIFI complex, UBR4 initiates ubiquitin chain that are further elongated or branched by KCMF1.

The protein resides in the mitochondrion inner membrane. It functions in the pathway energy metabolism; oxidative phosphorylation. Component of the cytochrome c oxidase, the last enzyme in the mitochondrial electron transport chain which drives oxidative phosphorylation. The respiratory chain contains 3 multisubunit complexes succinate dehydrogenase (complex II, CII), ubiquinol-cytochrome c oxidoreductase (cytochrome b-c1 complex, complex III, CIII) and cytochrome c oxidase (complex IV, CIV), that cooperate to transfer electrons derived from NADH and succinate to molecular oxygen, creating an electrochemical gradient over the inner membrane that drives transmembrane transport and the ATP synthase. Cytochrome c oxidase is the component of the respiratory chain that catalyzes the reduction of oxygen to water. Electrons originating from reduced cytochrome c in the intermembrane space (IMS) are transferred via the dinuclear copper A center (CU(A)) of subunit 2 and heme A of subunit 1 to the active site in subunit 1, a binuclear center (BNC) formed by heme A3 and copper B (CU(B)). The BNC reduces molecular oxygen to 2 water molecules using 4 electrons from cytochrome c in the IMS and 4 protons from the mitochondrial matrix. In Pan troglodytes (Chimpanzee), this protein is Cytochrome c oxidase subunit 5A, mitochondrial (COX5A).